Reading from the N-terminus, the 597-residue chain is Elongation factor 4 (597 aa).

The 183-residue stretch at 2 to 184 (KNIRNFSIIA…EVVNKIPPPK (183 aa)) folds into the tr-type G domain. Residues 14–19 (DHGKST) and 131–134 (NKID) each bind GTP.

The protein belongs to the TRAFAC class translation factor GTPase superfamily. Classic translation factor GTPase family. LepA subfamily.

The protein resides in the cell inner membrane. The enzyme catalyses GTP + H2O = GDP + phosphate + H(+). In terms of biological role, required for accurate and efficient protein synthesis under certain stress conditions. May act as a fidelity factor of the translation reaction, by catalyzing a one-codon backward translocation of tRNAs on improperly translocated ribosomes. Back-translocation proceeds from a post-translocation (POST) complex to a pre-translocation (PRE) complex, thus giving elongation factor G a second chance to translocate the tRNAs correctly. Binds to ribosomes in a GTP-dependent manner. In Chromobacterium violaceum (strain ATCC 12472 / DSM 30191 / JCM 1249 / CCUG 213 / NBRC 12614 / NCIMB 9131 / NCTC 9757 / MK), this protein is Elongation factor 4.